A 677-amino-acid chain; its full sequence is Methionine--tRNA ligase (677 aa).

Residues 15–25 (PYANGSIHLGH) carry the 'HIGH' region motif. Residues C146, C149, C159, and C162 each coordinate Zn(2+). Residues 333–337 (KMSKS) carry the 'KMSKS' region motif. ATP is bound at residue K336. One can recognise a tRNA-binding domain in the interval 575–677 (DFAKIDLRVA…DGAKPGQQVK (103 aa)).

This sequence belongs to the class-I aminoacyl-tRNA synthetase family. MetG type 1 subfamily. In terms of assembly, homodimer. It depends on Zn(2+) as a cofactor.

Its subcellular location is the cytoplasm. It carries out the reaction tRNA(Met) + L-methionine + ATP = L-methionyl-tRNA(Met) + AMP + diphosphate. Its function is as follows. Is required not only for elongation of protein synthesis but also for the initiation of all mRNA translation through initiator tRNA(fMet) aminoacylation. In Salmonella typhimurium (strain LT2 / SGSC1412 / ATCC 700720), this protein is Methionine--tRNA ligase.